We begin with the raw amino-acid sequence, 293 residues long: MAAKIVSVLFLISLLIFASFESSHGSQIVIYWGQNGDEGSLADTCNSGNYGTVILAFVATFGNGQTPALNLAGHCDPATNCNSLSSDIKTCQQAGIKVLLSIGGGAGGYSLSSTDDANTFADYLWNTYLGGQSSTRPLGDAVLDGIDFDIESGDGRFWDDLARALAGHNNGQKTVYLSAAPQCPLPDASLSTAIATGLFDYVWVQFYNNPPCQYDTSADNLLSSWNQWTTVQANQIFLGLPASTDAAGSGFIPADALTSQVLPTIKGSAKYGGVMLWSKAYDSGYSSAIKSSV.

Residues 1-25 form the signal peptide; the sequence is MAAKIVSVLFLISLLIFASFESSHG. The GH18 domain maps to 26-293; it reads SQIVIYWGQN…GYSSAIKSSV (268 aa). 2 cysteine pairs are disulfide-bonded: C45/C91 and C75/C81. E151 serves as the catalytic Proton donor. An intrachain disulfide couples C183 to C212.

The protein belongs to the glycosyl hydrolase 18 family. Chitinase class II subfamily. In terms of tissue distribution, accumulates in leaves during infection.

It is found in the secreted. It localises to the extracellular space. It carries out the reaction Random endo-hydrolysis of N-acetyl-beta-D-glucosaminide (1-&gt;4)-beta-linkages in chitin and chitodextrins.. This protein functions as a defense against chitin containing fungal pathogens. This endochitinase also exhibits exochitinase activity, i.e. it is capable of hydrolyzing chito-oligosaccharides, including chitobiose. The protein is Acidic endochitinase SE2 (SE2) of Beta vulgaris (Sugar beet).